We begin with the raw amino-acid sequence, 387 residues long: Zinc homeostasis factor 1 (387 aa).

Helical transmembrane passes span 10 to 30, 34 to 54, 77 to 97, and 113 to 133; these read IILL…TGYA, LALI…LVAL, EILG…FIFM, and TLMF…IFLF. The segment covering 195-214 has biased composition (polar residues); the sequence is SYTGNHNGAGTSKPVNNHGS. The segment at 195 to 221 is disordered; it reads SYTGNHNGAGTSKPVNNHGSIEQDAPK. 2 helical membrane passes run 234 to 254 and 263 to 283; these read FLHV…ALFI and FLFD…SAIP.

This sequence belongs to the cation diffusion facilitator (CDF) transporter (TC 2.A.4) family. SLC30A subfamily.

The protein resides in the endoplasmic reticulum membrane. The protein localises to the nucleus membrane. Its function is as follows. Involved in zinc homeostasis, where it plays a role in its accumulation in the endoplasmic reticulum/nucleus. Also has a role in the sequestration of cadmium into the endoplasmic reticulum. The polypeptide is Zinc homeostasis factor 1 (zhf1) (Schizosaccharomyces pombe (strain 972 / ATCC 24843) (Fission yeast)).